The chain runs to 283 residues: Phosphatidylserine decarboxylase proenzyme (283 aa).

Catalysis depends on charge relay system; for autoendoproteolytic cleavage activity residues D88, H145, and S248. S248 serves as the catalytic Schiff-base intermediate with substrate; via pyruvic acid; for decarboxylase activity. S248 carries the post-translational modification Pyruvic acid (Ser); by autocatalysis.

Belongs to the phosphatidylserine decarboxylase family. PSD-B subfamily. Prokaryotic type I sub-subfamily. In terms of assembly, heterodimer of a large membrane-associated beta subunit and a small pyruvoyl-containing alpha subunit. The cofactor is pyruvate. Post-translationally, is synthesized initially as an inactive proenzyme. Formation of the active enzyme involves a self-maturation process in which the active site pyruvoyl group is generated from an internal serine residue via an autocatalytic post-translational modification. Two non-identical subunits are generated from the proenzyme in this reaction, and the pyruvate is formed at the N-terminus of the alpha chain, which is derived from the carboxyl end of the proenzyme. The autoendoproteolytic cleavage occurs by a canonical serine protease mechanism, in which the side chain hydroxyl group of the serine supplies its oxygen atom to form the C-terminus of the beta chain, while the remainder of the serine residue undergoes an oxidative deamination to produce ammonia and the pyruvoyl prosthetic group on the alpha chain. During this reaction, the Ser that is part of the protease active site of the proenzyme becomes the pyruvoyl prosthetic group, which constitutes an essential element of the active site of the mature decarboxylase.

It is found in the cell membrane. The enzyme catalyses a 1,2-diacyl-sn-glycero-3-phospho-L-serine + H(+) = a 1,2-diacyl-sn-glycero-3-phosphoethanolamine + CO2. It functions in the pathway phospholipid metabolism; phosphatidylethanolamine biosynthesis; phosphatidylethanolamine from CDP-diacylglycerol: step 2/2. Functionally, catalyzes the formation of phosphatidylethanolamine (PtdEtn) from phosphatidylserine (PtdSer). This Acidovorax ebreus (strain TPSY) (Diaphorobacter sp. (strain TPSY)) protein is Phosphatidylserine decarboxylase proenzyme.